The chain runs to 180 residues: UPF0340 protein LACR_0494 (180 aa).

It belongs to the UPF0340 family.

The sequence is that of UPF0340 protein LACR_0494 from Lactococcus lactis subsp. cremoris (strain SK11).